Here is a 141-residue protein sequence, read N- to C-terminus: Putative nickel-responsive regulator (141 aa).

Residues histidine 80, histidine 91, histidine 93, and cysteine 99 each coordinate Ni(2+).

It belongs to the transcriptional regulatory CopG/NikR family. Requires Ni(2+) as cofactor.

Its function is as follows. Transcriptional regulator. In Methanococcus vannielii (strain ATCC 35089 / DSM 1224 / JCM 13029 / OCM 148 / SB), this protein is Putative nickel-responsive regulator.